The primary structure comprises 263 residues: MKRLLCLLLLTTLTGCETLLIKNPSAQESEVTSATTNVDAVEGDKAKEEDSGIIDTLRGRNDPIAGDPAWAPIHPKEKPEHYAAATGSLFNVDHAQDMYDDTKPRGLGDIVTVMLAENTKAAKSADAELSKSNDSSMDPLQVGGQELQMGGQYNFSYELSNDNNFTGNTSANQSNSLSGSITVEVIEVLSNGNLLIRGEKWLTLNTGDEYIRLSGTIRPDDINFDNTIDSTRISNARIQYSGTGDQQDMQEPGFLARFFNVAL.

An N-terminal signal peptide occupies residues 1–15 (MKRLLCLLLLTTLTG). C16 carries the N-palmitoyl cysteine lipid modification. C16 carries the S-diacylglycerol cysteine lipid modification. Residues 123–143 (KSADAELSKSNDSSMDPLQVG) are disordered.

Belongs to the FlgH family. As to quaternary structure, the basal body constitutes a major portion of the flagellar organelle and consists of four rings (L,P,S, and M) mounted on a central rod.

It localises to the cell outer membrane. It is found in the bacterial flagellum basal body. In terms of biological role, assembles around the rod to form the L-ring and probably protects the motor/basal body from shearing forces during rotation. This Aliivibrio fischeri (strain ATCC 700601 / ES114) (Vibrio fischeri) protein is Flagellar L-ring protein.